The following is a 103-amino-acid chain: Large ribosomal subunit protein uL24 (103 aa).

The protein belongs to the universal ribosomal protein uL24 family. As to quaternary structure, part of the 50S ribosomal subunit.

One of two assembly initiator proteins, it binds directly to the 5'-end of the 23S rRNA, where it nucleates assembly of the 50S subunit. Its function is as follows. One of the proteins that surrounds the polypeptide exit tunnel on the outside of the subunit. In Synechococcus sp. (strain CC9311), this protein is Large ribosomal subunit protein uL24.